The chain runs to 211 residues: Wound-induced protein WIN2 (211 aa).

Positions Met1–Ala25 are cleaved as a signal peptide. One can recognise a Chitin-binding type-1 domain in the interval Gln26–Gly68. Cystine bridges form between Cys28–Cys43, Cys37–Cys49, Cys42–Cys56, and Cys62–Cys66. The 122-residue stretch at Gly77 to Asp198 folds into the Barwin domain.

The polypeptide is Wound-induced protein WIN2 (WIN2) (Solanum tuberosum (Potato)).